The sequence spans 107 residues: Sperm-specific class P protein 32 (107 aa).

The tract at residues 1–20 (MLTIEPPSATFPASGGSSTH) is disordered. The region spanning 1–107 (MLTIEPPSAT…GDVTILLKTN (107 aa)) is the MSP domain.

In terms of tissue distribution, expressed at higher level in testis.

This Caenorhabditis elegans protein is Sperm-specific class P protein 32 (ssp-32).